Consider the following 101-residue polypeptide: NADH-quinone oxidoreductase subunit K (101 aa).

Transmembrane regions (helical) follow at residues 4-24, 30-50, and 61-81; these read LTHY…GIFM, LVLL…FIAF, and IFVF…LAIM.

The protein belongs to the complex I subunit 4L family. As to quaternary structure, NDH-1 is composed of 14 different subunits. Subunits NuoA, H, J, K, L, M, N constitute the membrane sector of the complex.

The protein localises to the cell inner membrane. It catalyses the reaction a quinone + NADH + 5 H(+)(in) = a quinol + NAD(+) + 4 H(+)(out). Its function is as follows. NDH-1 shuttles electrons from NADH, via FMN and iron-sulfur (Fe-S) centers, to quinones in the respiratory chain. The immediate electron acceptor for the enzyme in this species is believed to be ubiquinone. Couples the redox reaction to proton translocation (for every two electrons transferred, four hydrogen ions are translocated across the cytoplasmic membrane), and thus conserves the redox energy in a proton gradient. This Neisseria meningitidis serogroup B (strain ATCC BAA-335 / MC58) protein is NADH-quinone oxidoreductase subunit K.